The following is a 73-amino-acid chain: MKANIHPNYHKITVVMTDGTQYTTRSTWGKEGDTLNLDIDPRTHPAWTGGSQTLVDRGGRLSKFKNRFGNIGM.

The protein belongs to the bacterial ribosomal protein bL31 family. Type A subfamily. Part of the 50S ribosomal subunit.

Binds the 23S rRNA. The polypeptide is Large ribosomal subunit protein bL31 (Bartonella tribocorum (strain CIP 105476 / IBS 506)).